The following is a 152-amino-acid chain: MEKLEVGQLAPDFRLKNSDGVEISLKDLLHKKVVLYFYPKDNTPGCTLEAKDFSALFSEFEKKNAVVVGVSPDNSQSHQKFISQCSLNVILLCDEDKKVANLYKAYGKRMLYGKEHLGIIRSTFIINTQGVLEKCFYNVKAKGHAQKVLESL.

One can recognise a Thioredoxin domain in the interval leucine 4–leucine 152. Cysteine 46 functions as the Cysteine sulfenic acid (-SOH) intermediate in the catalytic mechanism. A disulfide bond links cysteine 46 and cysteine 85.

This sequence belongs to the peroxiredoxin family. BCP/PrxQ subfamily. Monomer.

It catalyses the reaction a hydroperoxide + [thioredoxin]-dithiol = an alcohol + [thioredoxin]-disulfide + H2O. Its function is as follows. Thiol-specific peroxidase that catalyzes the reduction of hydrogen peroxide and organic hydroperoxides to water and alcohols, respectively. Plays a role in cell protection against oxidative stress by detoxifying peroxides and as sensor of hydrogen peroxide-mediated signaling events. The chain is Putative peroxiredoxin bcp (bcp) from Helicobacter pylori (strain J99 / ATCC 700824) (Campylobacter pylori J99).